Here is a 181-residue protein sequence, read N- to C-terminus: Photosystem I assembly protein Ycf4 (181 aa).

Transmembrane regions (helical) follow at residues 19 to 41 (YFWA…SSYF) and 61 to 83 (LVMS…TLFW).

It belongs to the Ycf4 family.

The protein resides in the plastid. Its subcellular location is the chloroplast thylakoid membrane. Functionally, seems to be required for the assembly of the photosystem I complex. In Trieres chinensis (Marine centric diatom), this protein is Photosystem I assembly protein Ycf4.